A 197-amino-acid polypeptide reads, in one-letter code: Guanylate kinase (197 aa).

The 186-residue stretch at Ser6–Ser191 folds into the Guanylate kinase-like domain. ATP is bound at residue Gly13–Gly20.

Belongs to the guanylate kinase family.

It is found in the cytoplasm. The catalysed reaction is GMP + ATP = GDP + ADP. Its function is as follows. Essential for recycling GMP and indirectly, cGMP. The chain is Guanylate kinase from Mesomycoplasma hyopneumoniae (strain 7448) (Mycoplasma hyopneumoniae).